The primary structure comprises 254 residues: L-arabinose 1-dehydrogenase (NAD(P)(+)) (254 aa).

The active-site Proton acceptor is tyrosine 142. NAD(+)-binding residues include tyrosine 142 and lysine 146.

It belongs to the NAD(P)-dependent epimerase/dehydratase family. Homotetramer.

The enzyme catalyses alpha-L-arabinopyanose + NAD(+) = L-arabinono-1,4-lactone + NADH + H(+). It catalyses the reaction alpha-L-arabinopyanose + NADP(+) = L-arabinono-1,4-lactone + NADPH + H(+). Its pathway is carbohydrate degradation; L-arabinose degradation via L-arabinono-1,4-lactone pathway. Its function is as follows. L-AraDH initiates the degradation of L-arabinose. Catalyzes the NAD(P)(+)-dependent conversion of L-arabinose to L-arabino-gamma-lactone. It is highly specific for L-arabinose as substrate and can use both NADP(+) and NAD(+) as electron acceptor, with a slight preference for NADP(+). This is L-arabinose 1-dehydrogenase (NAD(P)(+)) from Haloferax volcanii (strain ATCC 29605 / DSM 3757 / JCM 8879 / NBRC 14742 / NCIMB 2012 / VKM B-1768 / DS2) (Halobacterium volcanii).